A 184-amino-acid chain; its full sequence is MGIEEKLPSGVLLSTVEGLAGYMRKASFWPASFGLACCAIEMMTSGGPKHDLGRFGMEVFRASPRQADVMIVAGRVSQKMAPVLRQIYDQMPEPKWVLAMGVCASSGGMFNNYAVVQGVDHVVPVDMYLPGCPPRPQMLIDAILKLHDKVQHTKMGAHRAAEIEELETAALRALPTSEMKGQLR.

[4Fe-4S] cluster-binding residues include Cys-37, Cys-38, Cys-103, and Cys-132.

Belongs to the complex I 20 kDa subunit family. In terms of assembly, NDH-1 is composed of 14 different subunits. Subunits NuoB, C, D, E, F, and G constitute the peripheral sector of the complex. Requires [4Fe-4S] cluster as cofactor.

It is found in the cell membrane. The enzyme catalyses a quinone + NADH + 5 H(+)(in) = a quinol + NAD(+) + 4 H(+)(out). Its function is as follows. NDH-1 shuttles electrons from NADH, via FMN and iron-sulfur (Fe-S) centers, to quinones in the respiratory chain. The immediate electron acceptor for the enzyme in this species is believed to be a menaquinone. Couples the redox reaction to proton translocation (for every two electrons transferred, four hydrogen ions are translocated across the cytoplasmic membrane), and thus conserves the redox energy in a proton gradient. The polypeptide is NADH-quinone oxidoreductase subunit B (Nocardioides sp. (strain ATCC BAA-499 / JS614)).